A 335-amino-acid polypeptide reads, in one-letter code: Glucokinase (335 aa).

Residue 11–16 (ADIGGT) coordinates ATP.

It belongs to the bacterial glucokinase family.

Its subcellular location is the cytoplasm. It catalyses the reaction D-glucose + ATP = D-glucose 6-phosphate + ADP + H(+). The protein is Glucokinase of Xanthomonas axonopodis pv. citri (strain 306).